Consider the following 1343-residue polypeptide: MENLPFPLKLLSASSLNAPSSTPWVLDIFLTLVFALGFFFLLLPYLSYFHCDDPPSPSPGKRKCPVGRRRRPRGRMKNHSLRAGRECPRGLEETSDLLSQLQSLLGPHLDKGDFGQLSGPDPPGEVGERAPDGASQSSHEPMEDAAPILSPLASPDPQAKHPQDLASTPSPGPMTTSVSSLSASQPPEPSLPLEHPSPEPPALFPHPPHTPDPLACSPPPPKGFTAPPLRDSTLITPSHCDSVALPLGTVPQSLSPHEDLVASVPAISGLGGSNSHVSASSRWQETARTSCAFNSSVQQDPLSRHPPETCQMEAGSLFLLSSDGQNVVGIQVTETAKVNIWEEKENVGSFTNQMTPEKHLNSLGNLAKSLDAEQDTTNPKPFWNMGENSKQLPGPQKCSDPRLLQESFWKNYSQLFWGLPSLHSESLVANAWVTDRSYTLQSPPFLFNEMSNVCPIQRETTMSPLLFQAQPLSHRQPFISSTPQFLPTPMAQAEAQAHLQSSFPVLSPAFPSLIKNTGVACPASQNKVQALSLPETQHPEWPLLRKQLEGRLALPSRVQKSQDVFSVSTPNLPQESLTSILPENFPVSPELRRQLEQHIKKWIIQHWGNLGRIQESLDLMQLRDESPGTSQAKGKPSPWQSSTSTGESSKEAQKVKFQLERDLCPHLGQILGETPQNLSRDMKSFPRKVLGVTSEESERNLRKPLRSDSGSDLLRCTERTHIENILKAHMGRNLGQTNEGLIPVRVRRSWLAVNQALPVSNTHVKTSNLAAPKSGKACVNTAQVLSFLEPCTQQGLGAHIVRFWAKHRWGLPLRVLKPIQCFKLEKVSSLSLTQLAGPSSATCESGAGSEVEVDMFLRKPPMASLRKQVLTKASDHMPESLLASSPAWKQFQRAPRGIPSWNDHGPLKPPPAGQEGRWPSKPLTYSLTGSTQQSRSLGAQSSKAGETREAVPQCRVPLETCMLANLQATSEDVHGFEAPGTSKSSLHPRVSVSQDPRKLCLMEEVVSEFEPGMATKSETQPQVCAAVVLLPDGQASVVPHASENLVSQVPQGHLQSMPTGNMRASQELHDLMAARRSKLVQEEPRNPNCQGSCKSQRPMFPPIHKSEKSRKPNLEKHEERLEGLRTPQLTPVRKTEDTHQDEGVQLLPSKKQPPSVSHFGENIKQFFQWIFSKKKSKPAPVTAESQKTVKNRSCVYSSSAEAQGLMTAVGQMLDKKMSLCHAHHASKVNQHKQKFQAPVCGFPCNHRHLFYSEHGRILSYAASSQQATLKSQGCPNRDRQIRNQQPLKSVRCNNEQWGLRHPQILHPKKAVSPVSPPQHWPKTSGASSHHHHCPRHCLLWEGI.

A helical transmembrane segment spans residues 23 to 43; sequence PWVLDIFLTLVFALGFFFLLL. Disordered regions lie at residues 55-88, 106-235, 624-654, 895-951, 1080-1156, and 1309-1331; these read PSPS…RECP, GPHL…STLI, DESP…EAQK, PRGI…REAV, VQEE…PPSV, and KAVS…SHHH. Over residues 60–82 the composition is skewed to basic residues; it reads GKRKCPVGRRRRPRGRMKNHSLR. Over residues 165–178 the composition is skewed to polar residues; sequence LASTPSPGPMTTSV. The segment covering 198–222 has biased composition (pro residues); that stretch reads PEPPALFPHPPHTPDPLACSPPPPK. 2 stretches are compositionally biased toward polar residues: residues 627-647 and 923-944; these read PGTS…STGE and LTYS…SSKA. Basic and acidic residues-rich tracts occupy residues 1104–1123 and 1133–1142; these read HKSE…RLEG and RKTEDTHQDE.

This sequence belongs to the SPATA31 family.

It localises to the membrane. May play a role in spermatogenesis. The chain is Spermatogenesis-associated protein 31A6 (SPATA31A6) from Homo sapiens (Human).